We begin with the raw amino-acid sequence, 398 residues long: MVKRVHIFDWHKEHARKIEEFAGWEMPIWYSSIKEEHLAVRNAVGIFDVSHMGEIVFRGKDALKFLQYVTTNDISKPPAISGTYTLVLNERGAIKDETLVFNMGNNEYLMICDSDAFEKLYAWFTYLKRTIEQFTKLDLEIELKTYDIAMFAVQGPKARDLAKDLFGIDINEMWWFQARWVELDGIKMLLSRSGYTGENGFEVYIEDANPYHPDESKRGEPEKALHVWERILEEGKKYGIKPCGLGARDTLRLEAGYTLYGNETKELQLLSTDIDEVTPLQANLEFAIYWDKDFIGKDALLKQKERGVGRKLVHFKMIDKGIPREGYKVYANGEMIGEVTSGTLSPLLNVGIGIAFVKEEYAKPGIEIEVEIRGQRKKAVTVTPPFYDPKKYGLFRET.

Belongs to the GcvT family. The glycine cleavage system is composed of four proteins: P, T, L and H.

The enzyme catalyses N(6)-[(R)-S(8)-aminomethyldihydrolipoyl]-L-lysyl-[protein] + (6S)-5,6,7,8-tetrahydrofolate = N(6)-[(R)-dihydrolipoyl]-L-lysyl-[protein] + (6R)-5,10-methylene-5,6,7,8-tetrahydrofolate + NH4(+). Functionally, the glycine cleavage system catalyzes the degradation of glycine. This is Probable aminomethyltransferase from Pyrococcus horikoshii (strain ATCC 700860 / DSM 12428 / JCM 9974 / NBRC 100139 / OT-3).